Consider the following 727-residue polypeptide: NADH-ubiquinone oxidoreductase 75 kDa subunit, mitochondrial (727 aa).

A mitochondrion-targeting transit peptide spans Met-1–Thr-23. Positions Asn-30–Lys-108 constitute a 2Fe-2S ferredoxin-type domain. 3 residues coordinate [2Fe-2S] cluster: Cys-64, Cys-75, and Cys-78. Lys-84 bears the N6-acetyllysine mark. Cys-92 is a [2Fe-2S] cluster binding site. The 4Fe-4S His(Cys)3-ligated-type domain occupies Lys-108 to Gly-147. The [4Fe-4S] cluster site is built by His-124, Cys-128, Cys-131, Cys-137, Cys-176, Cys-179, Cys-182, and Cys-226. The region spanning Thr-245 to Arg-301 is the 4Fe-4S Mo/W bis-MGD-type domain. 3 positions are modified to N6-acetyllysine: Lys-467, Lys-499, and Lys-709.

The protein belongs to the complex I 75 kDa subunit family. As to quaternary structure, core subunit of respiratory chain NADH dehydrogenase (Complex I) which is composed of 45 different subunits. This is the largest subunit of complex I and it is a component of the iron-sulfur (IP) fragment of the enzyme. Complex I associates with ubiquinol-cytochrome reductase complex (Complex III) to form supercomplexes. Interacts with MDM2 and AKAP1. [2Fe-2S] cluster serves as cofactor. It depends on [4Fe-4S] cluster as a cofactor.

It is found in the mitochondrion inner membrane. The catalysed reaction is a ubiquinone + NADH + 5 H(+)(in) = a ubiquinol + NAD(+) + 4 H(+)(out). Core subunit of the mitochondrial membrane respiratory chain NADH dehydrogenase (Complex I) which catalyzes electron transfer from NADH through the respiratory chain, using ubiquinone as an electron acceptor. Essential for catalysing the entry and efficient transfer of electrons within complex I. Plays a key role in the assembly and stability of complex I and participates in the association of complex I with ubiquinol-cytochrome reductase complex (Complex III) to form supercomplexes. The polypeptide is NADH-ubiquinone oxidoreductase 75 kDa subunit, mitochondrial (NDUFS1) (Gorilla gorilla gorilla (Western lowland gorilla)).